The sequence spans 427 residues: MMDKIIVKGGQTKLQGEVEIEGAKNAVLPLLAATLLASEGEVVLTNVPILSDVFMMNNLVNHLGTAISFDQEAKKIIAKSNSEIKTTAPYEYVSKMRASIVVMGPILARNGQARVSMPGGCSIGSRPIDLHLRGFEQMGATITQNAGYIEAKADKLKGAHIYLDFPSVGATQNLILAATLADGTTTLENAAREPEIVDLANLLNKMGANVKGAGTDTIIIKGVEKMHGANHSVVQDRIEAGTFMVAAAMTQGDVLIKDAIAEHNRPLISKLSEMGVNFIQEESGLRVVGPEKLKATSVKTLPHPGFPTDMQSQMTAAQAVAVGESVMVETVFENRFQHLKEMRRIGLEVDITRNTALIQGNSNLQGAAVKSTDLRASAALILLGLVAKGQTTVRRLSHLDRGYYKFHEKLKALGADIIRVEDEDGEG.

Residue Lys-24–Asn-25 participates in phosphoenolpyruvate binding. Residue Arg-97 participates in UDP-N-acetyl-alpha-D-glucosamine binding. Residue Cys-121 is the Proton donor of the active site. Cys-121 carries the post-translational modification 2-(S-cysteinyl)pyruvic acid O-phosphothioketal. UDP-N-acetyl-alpha-D-glucosamine-binding positions include Arg-126–Leu-130, Asp-309, and Val-331.

It belongs to the EPSP synthase family. MurA subfamily.

The protein localises to the cytoplasm. It catalyses the reaction phosphoenolpyruvate + UDP-N-acetyl-alpha-D-glucosamine = UDP-N-acetyl-3-O-(1-carboxyvinyl)-alpha-D-glucosamine + phosphate. Its pathway is cell wall biogenesis; peptidoglycan biosynthesis. In terms of biological role, cell wall formation. Adds enolpyruvyl to UDP-N-acetylglucosamine. The sequence is that of UDP-N-acetylglucosamine 1-carboxyvinyltransferase 1 from Lactococcus lactis subsp. lactis (strain IL1403) (Streptococcus lactis).